Reading from the N-terminus, the 761-residue chain is Protein transport protein SEC23 C (761 aa).

Residues cysteine 60, cysteine 63, cysteine 82, and cysteine 85 each contribute to the Zn(2+) site. The zinc finger-like stretch occupies residues 60–85 (CRTCRSVLNPYSVVDFSACNWGCPFC).

This sequence belongs to the SEC23/SEC24 family. SEC24 subfamily. As to quaternary structure, component of the coat protein complex II (COPII), composed of at least five proteins: the Sec23/24 complex, the Sec13/31 complex and Sar1.

Its subcellular location is the cytoplasmic vesicle. The protein localises to the COPII-coated vesicle membrane. It is found in the endoplasmic reticulum membrane. The protein resides in the membrane. In terms of biological role, component of the coat protein complex II (COPII) which promotes the formation of transport vesicles from the endoplasmic reticulum (ER). The coat has two main functions, the physical deformation of the endoplasmic reticulum membrane into vesicles and the selection of cargo molecules. This is Protein transport protein SEC23 C from Arabidopsis thaliana (Mouse-ear cress).